We begin with the raw amino-acid sequence, 238 residues long: Ribonuclease PH (238 aa).

Phosphate contacts are provided by residues Arg86 and 124–126 (GTR).

This sequence belongs to the RNase PH family. As to quaternary structure, homohexameric ring arranged as a trimer of dimers.

It carries out the reaction tRNA(n+1) + phosphate = tRNA(n) + a ribonucleoside 5'-diphosphate. Phosphorolytic 3'-5' exoribonuclease that plays an important role in tRNA 3'-end maturation. Removes nucleotide residues following the 3'-CCA terminus of tRNAs; can also add nucleotides to the ends of RNA molecules by using nucleoside diphosphates as substrates, but this may not be physiologically important. Probably plays a role in initiation of 16S rRNA degradation (leading to ribosome degradation) during starvation. The protein is Ribonuclease PH of Vibrio cholerae serotype O1 (strain ATCC 39315 / El Tor Inaba N16961).